Here is a 467-residue protein sequence, read N- to C-terminus: Ankyrin repeat and SOCS box protein 10 (467 aa).

7 ANK repeats span residues 115 to 144 (ELTT…RPDS), 147 to 176 (GGRT…DPNI), 180 to 209 (DGKR…RVDG), 214 to 243 (EEET…CPDA), 247 to 289 (EGWT…DADA), 293 to 322 (DKQR…SANT), and 326 to 361 (GGHT…AVRV). The 53-residue stretch at 412 to 464 (YSSLFALVRQPRSLQHLSRCALRSHLEGSLPQALPRLPLPPRLLRYLQLDFEG) folds into the SOCS box domain.

Belongs to the ankyrin SOCS box (ASB) family. Expressed in the eye. The highest expression is observed in the iris, with moderate levels in the trabecular meshwork (TM), the lamina, and the optic nerve; slightly lower levels in the ciliary body, retina, and choroid; and very low levels in the lens.

The protein resides in the cytoplasm. Its subcellular location is the nucleus. The protein operates within protein modification; protein ubiquitination. Functionally, may be a substrate-recognition component of a SCF-like ECS (Elongin-Cullin-SOCS-box protein) E3 ubiquitin-protein ligase complex which mediates the ubiquitination and subsequent proteasomal degradation of target proteins. The protein is Ankyrin repeat and SOCS box protein 10 (ASB10) of Homo sapiens (Human).